The following is a 207-amino-acid chain: Large ribosomal subunit protein bL25 (207 aa).

Residues 171–207 (ESVVTVEVPEDATESTTAPEAAAAPADAAAAPAADAK) are disordered. The span at 184–207 (ESTTAPEAAAAPADAAAAPAADAK) shows a compositional bias: low complexity.

This sequence belongs to the bacterial ribosomal protein bL25 family. CTC subfamily. As to quaternary structure, part of the 50S ribosomal subunit; part of the 5S rRNA/L5/L18/L25 subcomplex. Contacts the 5S rRNA. Binds to the 5S rRNA independently of L5 and L18.

This is one of the proteins that binds to the 5S RNA in the ribosome where it forms part of the central protuberance. The sequence is that of Large ribosomal subunit protein bL25 from Bifidobacterium longum subsp. infantis (strain ATCC 15697 / DSM 20088 / JCM 1222 / NCTC 11817 / S12).